Reading from the N-terminus, the 245-residue chain is 1-(5-phosphoribosyl)-5-[(5-phosphoribosylamino)methylideneamino] imidazole-4-carboxamide isomerase (245 aa).

Residue D7 is the Proton acceptor of the active site. The active-site Proton donor is the D129.

Belongs to the HisA/HisF family.

It localises to the cytoplasm. It carries out the reaction 1-(5-phospho-beta-D-ribosyl)-5-[(5-phospho-beta-D-ribosylamino)methylideneamino]imidazole-4-carboxamide = 5-[(5-phospho-1-deoxy-D-ribulos-1-ylimino)methylamino]-1-(5-phospho-beta-D-ribosyl)imidazole-4-carboxamide. It functions in the pathway amino-acid biosynthesis; L-histidine biosynthesis; L-histidine from 5-phospho-alpha-D-ribose 1-diphosphate: step 4/9. This chain is 1-(5-phosphoribosyl)-5-[(5-phosphoribosylamino)methylideneamino] imidazole-4-carboxamide isomerase, found in Tolumonas auensis (strain DSM 9187 / NBRC 110442 / TA 4).